Consider the following 130-residue polypeptide: Small ribosomal subunit protein uS8 (130 aa).

The protein belongs to the universal ribosomal protein uS8 family. As to quaternary structure, part of the 30S ribosomal subunit.

One of the primary rRNA binding proteins, it binds directly to 16S rRNA central domain where it helps coordinate assembly of the platform of the 30S subunit. This is Small ribosomal subunit protein uS8 from Methanococcus aeolicus (strain ATCC BAA-1280 / DSM 17508 / OCM 812 / Nankai-3).